The primary structure comprises 467 residues: tRNA-2-methylthio-N(6)-dimethylallyladenosine synthase (467 aa).

A disordered region spans residues 1-20 (MSDDTTQIEPAMAQETSPRA). Residues 23 to 143 (RKVFVKTYGC…LPNALARVRG (121 aa)) enclose the MTTase N-terminal domain. [4Fe-4S] cluster-binding residues include Cys32, Cys68, Cys106, Cys184, Cys188, and Cys191. The region spanning 170-402 (RKRGVSAFLT…QALLSAQQYA (233 aa)) is the Radical SAM core domain. Residues 405 to 467 (DSMIGRKMDV…TNSLIAQKLA (63 aa)) form the TRAM domain.

Belongs to the methylthiotransferase family. MiaB subfamily. As to quaternary structure, monomer. [4Fe-4S] cluster is required as a cofactor.

The protein resides in the cytoplasm. It catalyses the reaction N(6)-dimethylallyladenosine(37) in tRNA + (sulfur carrier)-SH + AH2 + 2 S-adenosyl-L-methionine = 2-methylsulfanyl-N(6)-dimethylallyladenosine(37) in tRNA + (sulfur carrier)-H + 5'-deoxyadenosine + L-methionine + A + S-adenosyl-L-homocysteine + 2 H(+). Catalyzes the methylthiolation of N6-(dimethylallyl)adenosine (i(6)A), leading to the formation of 2-methylthio-N6-(dimethylallyl)adenosine (ms(2)i(6)A) at position 37 in tRNAs that read codons beginning with uridine. This Brucella suis (strain ATCC 23445 / NCTC 10510) protein is tRNA-2-methylthio-N(6)-dimethylallyladenosine synthase.